The primary structure comprises 335 residues: 2-acylglycerol O-acyltransferase 1 (335 aa).

Helical transmembrane passes span Trp24–Ile44 and Tyr104–Thr124. N-linked (GlcNAc...) asparagine glycosylation is found at Asn125 and Asn180.

The protein belongs to the diacylglycerol acyltransferase family.

Its subcellular location is the endoplasmic reticulum membrane. It carries out the reaction a 2-acylglycerol + an acyl-CoA = a 1,2-diacylglycerol + CoA. The enzyme catalyses 2-(9Z-octadecenoyl)-glycerol + butanoyl-CoA = 1-butanoyl-2-(9Z-octadecenoyl)-glycerol + CoA. It catalyses the reaction 2-(9Z-octadecenoyl)-glycerol + octanoyl-CoA = 1-octanoyl-2-(9Z-octadecenoyl)-glycerol + CoA. The catalysed reaction is 2-(9Z-octadecenoyl)-glycerol + dodecanoyl-CoA = 1-dodecanoyl-2-(9Z-octadecenoyl)-glycerol + CoA. It carries out the reaction 2-(9Z-octadecenoyl)-glycerol + tetradecanoyl-CoA = 1-tetradecanoyl-2-(9Z-octadecenoyl)-glycerol + CoA. The enzyme catalyses 2-(9Z-octadecenoyl)-glycerol + hexadecanoyl-CoA = 1-hexadecanoyl-2-(9Z-octadecenoyl)-glycerol + CoA. It catalyses the reaction 2-(9Z-octadecenoyl)-glycerol + octadecanoyl-CoA = 1-octadecanoyl-2-(9Z-octadecenoyl)-glycerol + CoA. The catalysed reaction is eicosanoyl-CoA + 2-(9Z-octadecenoyl)-glycerol = 1-eicosanoyl-2-(9Z-octadecenoyl)-glycerol + CoA. It carries out the reaction 2-(9Z-octadecenoyl)-glycerol + (9Z)-octadecenoyl-CoA = 1,2-di-(9Z-octadecenoyl)-glycerol + CoA. The enzyme catalyses 2-(9Z-octadecenoyl)-glycerol + (9Z,12Z)-octadecadienoyl-CoA = 1-(9Z,12Z-octadecadienoyl)-2-(9Z-octadecenoyl)-glycerol + CoA. It catalyses the reaction 2-(9Z-octadecenoyl)-glycerol + (5Z,8Z,11Z,14Z)-eicosatetraenoyl-CoA = 1-(5Z,8Z,11Z,14Z-eicosatetraenoyl)-2-(9Z-octadecenoyl)-glycerol + CoA. The catalysed reaction is a 2-acylglycerol + an acyl-CoA = a 1,2-diacyl-sn-glycerol + CoA. It carries out the reaction a 2-acylglycerol + an acyl-CoA = a 2,3-diacyl-sn-glycerol + CoA. The enzyme catalyses a 1-acylglycerol + an acyl-CoA = a 1,2-diacylglycerol + CoA. It catalyses the reaction 1-dodecanoylglycerol + (9Z)-octadecenoyl-CoA = 1-dodecanoyl-2-(9Z-octadecenoyl)-glycerol + CoA. The catalysed reaction is 1-tetradecanoylglycerol + (9Z)-octadecenoyl-CoA = 1-tetradecanoyl-2-(9Z-octadecenoyl)-glycerol + CoA. It carries out the reaction 1-hexadecanoylglycerol + (9Z)-octadecenoyl-CoA = 1-hexadecanoyl-2-(9Z-octadecenoyl)-glycerol + CoA. The enzyme catalyses 1-(9Z-octadecenoyl)-glycerol + (9Z)-octadecenoyl-CoA = 1,2-di-(9Z-octadecenoyl)-glycerol + CoA. It catalyses the reaction 1-(9Z,12Z-octadecadienoyl)-glycerol + (9Z)-octadecenoyl-CoA = 1-(9Z,12Z-octadecadienoyl)-2-(9Z-octadecenoyl)-glycerol + CoA. The catalysed reaction is 1-(9Z,12Z,15Z-octadecatrienoyl)-glycerol + (9Z)-octadecenoyl-CoA = 1-(9Z,12Z,15Z-octadecatrienoyl)-2-(9Z-octadecenoyl)-glycerol + CoA. It carries out the reaction 1-(5Z,8Z,11Z,14Z-eicosatetraenoyl)-glycerol + (9Z)-octadecenoyl-CoA = 1-(5Z,8Z,11Z,14Z-eicosatetraenoyl)-2-(9Z-octadecenoyl)-glycerol + CoA. The enzyme catalyses a 1-acylglycerol + an acyl-CoA = a 1,3-diacylglycerol + CoA. It catalyses the reaction 1-dodecanoylglycerol + (9Z)-octadecenoyl-CoA = 1-dodecanoyl-3-(9Z-octadecenoyl)-glycerol + CoA. The catalysed reaction is 1-hexadecanoylglycerol + (9Z)-octadecenoyl-CoA = 1-(9Z-octadecenoyl)-3-hexadecanoylglycerol + CoA. It carries out the reaction 1-octadecanoylglycerol + (9Z)-octadecenoyl-CoA = 1-octadecanoyl-3-(9Z-octadecenoyl)-glycerol + CoA. The enzyme catalyses 1-(9Z-octadecenoyl)-sn-glycerol + (9Z)-octadecenoyl-CoA = 1,3-di-(9Z-octadecenoyl)-glycerol + CoA. It catalyses the reaction 1-(9Z,12Z-octadecadienoyl)-glycerol + (9Z)-octadecenoyl-CoA = 1-(9Z-octadecenoyl)-3-(9Z,12Z-octadecadienoyl)-glycerol + CoA. The catalysed reaction is 1-(9Z,12Z,15Z-octadecatrienoyl)-glycerol + (9Z)-octadecenoyl-CoA = 1-(9Z,12Z,15Z-octadecatrienoyl)-3-(9Z-octadecenoyl)-glycerol + CoA. It carries out the reaction a 1-acyl-sn-glycerol + an acyl-CoA = a 1,3-diacyl-sn-glycerol + CoA. The enzyme catalyses a 3-acyl-sn-glycerol + an acyl-CoA = a 1,3-diacyl-sn-glycerol + CoA. It catalyses the reaction 3-octadecanoyl-sn-glycerol + (9Z)-octadecenoyl-CoA = 1-(9Z-octadecenoyl)-3-octadecanoyl-sn-glycerol + CoA. The protein operates within glycerolipid metabolism; triacylglycerol biosynthesis. Functionally, involved in glycerolipid synthesis and lipid metabolism. Catalyzes the formation of diacylglycerol, the precursor of triacylglycerol, by transferring the acyl chain of a fatty acyl-CoA to a monoacylglycerol, mainly at the sn-1 or sn-3 positions. It uses both sn-2-monoacylglycerol (2-acylglycerol) and sn-1-monoacylglycerol (1-acyl-sn-glycerol) equally well as substrates, and uses sn-3-monoacylglycerol (3-acyl-sn-glycerol) with lower efficiency. Probably not involved in absorption of dietary fat in the small intestine. The protein is 2-acylglycerol O-acyltransferase 1 (MOGAT1) of Bos taurus (Bovine).